Here is a 407-residue protein sequence, read N- to C-terminus: Peptide chain release factor subunit 1 (407 aa).

The protein belongs to the eukaryotic release factor 1 family. In terms of assembly, heterodimer of two subunits, one of which binds GTP.

It is found in the cytoplasm. Functionally, directs the termination of nascent peptide synthesis (translation) in response to the termination codons UAA, UAG and UGA. The sequence is that of Peptide chain release factor subunit 1 (prf1) from Archaeoglobus fulgidus (strain ATCC 49558 / DSM 4304 / JCM 9628 / NBRC 100126 / VC-16).